Consider the following 330-residue polypeptide: MDDFRNKLRNFLNNECLWVKNVACTSFTKVYCATTAVSPFFKPISPQGVPDKHYINVTLIILKPKKSHPYITVYINDLAVDCCSTEILQVKPVPCSHFSLIYFGPLIAPPHNVQIPANLSIKASKKSHLTKNQVIFTSKVIHPERLPDGYKSASLIGACAWYSEGAIFQHFLSTDYMSLCPAFKEFPSLSRILSLLTRCDDLSCVPCYGEKIHVNCQSGYTDSDCDGKSNSCPCITSCTALKKDIVPITGHRNLLSLLFDATIQHNITSIKFFSPQTPTTVNNVFCGVLDTGETVECTCEAWNLLMFSDFISRQMIYNCQIMKRFCLRSC.

The protein belongs to the herpesviridae cytoplasmic envelopment protein 2 family. As to quaternary structure, interacts with cytoplasmic envelopment protein 3 and with the capsid.

It localises to the virion tegument. The protein localises to the host cytoplasm. Its subcellular location is the host nucleus. Its function is as follows. Plays a critical role in cytoplasmic virus egress. Participates in the final step of tegumentation and envelope acquisition within the host cytoplasm by directly interacting with the capsid. Upon virion binding to target cell, a signaling cascade is triggered to disrupt the interaction with the capsid, thereby preparing capsid uncoating. The protein is Cytoplasmic envelopment protein 2 (33) of Saimiriine herpesvirus 2 (strain 11) (SaHV-2).